We begin with the raw amino-acid sequence, 345 residues long: Heat-inducible transcription repressor HrcA (345 aa).

It belongs to the HrcA family.

Functionally, negative regulator of class I heat shock genes (grpE-dnaK-dnaJ and groELS operons). Prevents heat-shock induction of these operons. In Dehalococcoides mccartyi (strain ATCC BAA-2100 / JCM 16839 / KCTC 5957 / BAV1), this protein is Heat-inducible transcription repressor HrcA.